Here is a 396-residue protein sequence, read N- to C-terminus: Ribosomal RNA large subunit methyltransferase I (396 aa).

The region spanning 2–81 (SVRLVLAKGR…ESIDIAFFTR (80 aa)) is the PUA domain.

This sequence belongs to the methyltransferase superfamily. RlmI family.

It localises to the cytoplasm. The catalysed reaction is cytidine(1962) in 23S rRNA + S-adenosyl-L-methionine = 5-methylcytidine(1962) in 23S rRNA + S-adenosyl-L-homocysteine + H(+). In terms of biological role, specifically methylates the cytosine at position 1962 (m5C1962) of 23S rRNA. This Escherichia coli (strain UTI89 / UPEC) protein is Ribosomal RNA large subunit methyltransferase I.